Consider the following 409-residue polypeptide: uncharacterized protein (409 aa).

Residues 305–409 enclose the HTH arsR-type domain; that stretch reads LTKIDEKVVK…LIGEDDELEM (105 aa).

This is an uncharacterized protein from Methanocaldococcus jannaschii (strain ATCC 43067 / DSM 2661 / JAL-1 / JCM 10045 / NBRC 100440) (Methanococcus jannaschii).